A 240-amino-acid chain; its full sequence is Ribonuclease HII (240 aa).

The RNase H type-2 domain occupies 31–222 (RLIAGVDEAG…VRRALGLETA (192 aa)). Positions 37, 38, and 130 each coordinate a divalent metal cation.

The protein belongs to the RNase HII family. Requires Mn(2+) as cofactor. The cofactor is Mg(2+).

The protein localises to the cytoplasm. The catalysed reaction is Endonucleolytic cleavage to 5'-phosphomonoester.. In terms of biological role, endonuclease that specifically degrades the RNA of RNA-DNA hybrids. This is Ribonuclease HII from Xanthomonas campestris pv. campestris (strain 8004).